The primary structure comprises 241 residues: Ubiquinone biosynthesis O-methyltransferase (241 aa).

4 residues coordinate S-adenosyl-L-methionine: Arg-44, Gly-64, Asp-85, and Met-129.

The protein belongs to the methyltransferase superfamily. UbiG/COQ3 family.

The enzyme catalyses a 3-demethylubiquinol + S-adenosyl-L-methionine = a ubiquinol + S-adenosyl-L-homocysteine + H(+). It carries out the reaction a 3-(all-trans-polyprenyl)benzene-1,2-diol + S-adenosyl-L-methionine = a 2-methoxy-6-(all-trans-polyprenyl)phenol + S-adenosyl-L-homocysteine + H(+). The protein operates within cofactor biosynthesis; ubiquinone biosynthesis. In terms of biological role, O-methyltransferase that catalyzes the 2 O-methylation steps in the ubiquinone biosynthetic pathway. This is Ubiquinone biosynthesis O-methyltransferase from Serratia proteamaculans (strain 568).